The sequence spans 393 residues: MANDFLFTSESVSEGHPDKVADQISDAILDAIFKQDPRSRVAAETLTNTGLVVLAGEITTNAHVDYIQVARDTIKRIGYDNTEYGIDYKGCAVLVAYDKQSNDIAQGVDHASDDHLNIGAGDQGLMFGYACDETPELMPAPIYYAHRLMERQAQLRKDGRLPFLRPDAKSQVTMRYVNGKPHSIDTVVLSTQHSPDQSETPHKMKASFTEAIIEEIIKPVLPKEWLKETKYLINPTGRFVIGGPQGDCGLTGRKIIVDTYGGACPHGGGAFSGKDPSKVDRSAAYAARYVAKNIVAAGLARQCQIQVAYAIGVARPMNVTVYTEGTGVISDEKLSALVHEHFDLRPKGIIQMLDLLRPIYEKTAAYGHFGRDEPEFSWERTDRAALLRAAAGR.

Residue His16 participates in ATP binding. Mg(2+) is bound at residue Asp18. Glu44 is a binding site for K(+). Residues Glu57 and Gln100 each coordinate L-methionine. A flexible loop region spans residues 100-110 (QSNDIAQGVDH). Residues 167 to 169 (DAK), 238 to 239 (RF), Asp247, 253 to 254 (RK), Ala270, and Lys274 contribute to the ATP site. Asp247 serves as a coordination point for L-methionine. Lys278 serves as a coordination point for L-methionine.

It belongs to the AdoMet synthase family. Homotetramer; dimer of dimers. The cofactor is Mg(2+). K(+) is required as a cofactor.

The protein localises to the cytoplasm. The enzyme catalyses L-methionine + ATP + H2O = S-adenosyl-L-methionine + phosphate + diphosphate. Its pathway is amino-acid biosynthesis; S-adenosyl-L-methionine biosynthesis; S-adenosyl-L-methionine from L-methionine: step 1/1. In terms of biological role, catalyzes the formation of S-adenosylmethionine (AdoMet) from methionine and ATP. The overall synthetic reaction is composed of two sequential steps, AdoMet formation and the subsequent tripolyphosphate hydrolysis which occurs prior to release of AdoMet from the enzyme. The chain is S-adenosylmethionine synthase from Polaromonas sp. (strain JS666 / ATCC BAA-500).